A 118-amino-acid polypeptide reads, in one-letter code: Thioredoxin H-type (118 aa).

The Thioredoxin domain maps to 2 to 114; it reads AAEEGQVIGC…LQQTIAKHMA (113 aa). Residues C40 and C43 each act as nucleophile in the active site. C40 and C43 are oxidised to a cystine.

This sequence belongs to the thioredoxin family. Plant H-type subfamily.

The protein resides in the cytoplasm. Participates in various redox reactions through the reversible oxidation of the active center dithiol to a disulfide. The H form is known to activate a number of cytosolic enzymes. This chain is Thioredoxin H-type, found in Ricinus communis (Castor bean).